The chain runs to 84 residues: Small ribosomal subunit protein bS18A (84 aa).

It belongs to the bacterial ribosomal protein bS18 family. Part of the 30S ribosomal subunit. Forms a tight heterodimer with protein bS6.

Binds as a heterodimer with protein bS6 to the central domain of the 16S rRNA, where it helps stabilize the platform of the 30S subunit. This is Small ribosomal subunit protein bS18A from Frankia alni (strain DSM 45986 / CECT 9034 / ACN14a).